The sequence spans 232 residues: Ribonuclease 3 (232 aa).

An RNase III domain is found at 10–135; it reads ALKIYEATGY…LIGAMYMDGG (126 aa). E48 serves as a coordination point for Mg(2+). D52 is an active-site residue. 2 residues coordinate Mg(2+): N121 and E124. E124 is a catalytic residue. Positions 161–230 constitute a DRBM domain; sequence DPKTALQEWV…AKLMLKKITE (70 aa).

Belongs to the ribonuclease III family. Homodimer. It depends on Mg(2+) as a cofactor.

The protein resides in the cytoplasm. The catalysed reaction is Endonucleolytic cleavage to 5'-phosphomonoester.. Digests double-stranded RNA. Involved in the processing of primary rRNA transcript to yield the immediate precursors to the large and small rRNAs (23S and 16S). Processes some mRNAs, and tRNAs when they are encoded in the rRNA operon. Processes pre-crRNA and tracrRNA of type II CRISPR loci if present in the organism. The chain is Ribonuclease 3 from Anaplasma marginale (strain St. Maries).